A 409-amino-acid chain; its full sequence is TM2 domain-containing protein ZK858.5 (409 aa).

The region spanning 8–55 (VKPWIVRIILIVGGLFGAHRLYLKQVPEAFVFFSTLGVLLIGWLYDSF) is the TM2 domain. 6 helical membrane-spanning segments follow: residues 10–30 (PWIV…RLYL), 37–57 (FVFF…SFMF), 104–124 (VLYG…TFGW), 127–147 (INLI…IYII), 168–190 (MFIM…AIVS), and 209–229 (HFLF…LGCS).

This sequence belongs to the TM2 family.

The protein localises to the membrane. This chain is TM2 domain-containing protein ZK858.5, found in Caenorhabditis elegans.